The sequence spans 589 residues: Proline--tRNA ligase (589 aa).

This sequence belongs to the class-II aminoacyl-tRNA synthetase family. ProS type 1 subfamily. As to quaternary structure, homodimer.

The protein localises to the cytoplasm. It carries out the reaction tRNA(Pro) + L-proline + ATP = L-prolyl-tRNA(Pro) + AMP + diphosphate. In terms of biological role, catalyzes the attachment of proline to tRNA(Pro) in a two-step reaction: proline is first activated by ATP to form Pro-AMP and then transferred to the acceptor end of tRNA(Pro). As ProRS can inadvertently accommodate and process non-cognate amino acids such as alanine and cysteine, to avoid such errors it has two additional distinct editing activities against alanine. One activity is designated as 'pretransfer' editing and involves the tRNA(Pro)-independent hydrolysis of activated Ala-AMP. The other activity is designated 'posttransfer' editing and involves deacylation of mischarged Ala-tRNA(Pro). The misacylated Cys-tRNA(Pro) is not edited by ProRS. The chain is Proline--tRNA ligase from Gloeobacter violaceus (strain ATCC 29082 / PCC 7421).